We begin with the raw amino-acid sequence, 262 residues long: Small ribosomal subunit protein eS1 (262 aa).

Belongs to the eukaryotic ribosomal protein eS1 family. As to quaternary structure, component of the small ribosomal subunit. Mature ribosomes consist of a small (40S) and a large (60S) subunit. The 40S subunit contains about 33 different proteins and 1 molecule of RNA (18S). The 60S subunit contains about 49 different proteins and 3 molecules of RNA (25S, 5.8S and 5S).

It localises to the cytoplasm. The chain is Small ribosomal subunit protein eS1 from Theileria annulata.